Consider the following 74-residue polypeptide: MDFEKKLGRLEEIVQKMEKGDLALEESLKLFEEGVKLSRECHQRLNEAESKVKLLMSVGADGQPVTTDFTSEEN.

The protein belongs to the XseB family. As to quaternary structure, heterooligomer composed of large and small subunits.

It is found in the cytoplasm. It carries out the reaction Exonucleolytic cleavage in either 5'- to 3'- or 3'- to 5'-direction to yield nucleoside 5'-phosphates.. In terms of biological role, bidirectionally degrades single-stranded DNA into large acid-insoluble oligonucleotides, which are then degraded further into small acid-soluble oligonucleotides. The polypeptide is Exodeoxyribonuclease 7 small subunit (Bdellovibrio bacteriovorus (strain ATCC 15356 / DSM 50701 / NCIMB 9529 / HD100)).